A 271-amino-acid polypeptide reads, in one-letter code: Short-chain dehydrogenase/reductase SAT3 (271 aa).

3 residues coordinate NADP(+): Ser17, Asp40, and Asn67. Catalysis depends on Ser153, which acts as the Proton donor. The NADP(+) site is built by Tyr168, Lys172, and Ser203. Tyr168 (proton acceptor) is an active-site residue. Catalysis depends on Lys172, which acts as the Lowers pKa of active site Tyr.

It belongs to the short-chain dehydrogenases/reductases (SDR) family.

It functions in the pathway mycotoxin biosynthesis. In terms of biological role, short-chain dehydrogenase/reductase; part of the satratoxin SC1 cluster involved in the biosynthesis of satratoxins, trichothecene mycotoxins that are associated with human food poisonings. Satratoxins are suggested to be made by products of multiple gene clusters (SC1, SC2 and SC3) that encode 21 proteins in all, including polyketide synthases, acetyltransferases, and other enzymes expected to modify the trichothecene skeleton. SC1 encodes 10 proteins, SAT1 to SAT10. The largest are SAT8, which encodes a putative polyketide synthase (PKS) with a conventional non-reducing architecture, and SAT10, a putative protein containing four ankyrin repeats and thus may be involved in protein scaffolding. The putative short-chain reductase SAT3 may assist the PKS in some capacity. SAT6 contains a secretory lipase domain and acts probably as a trichothecene esterase. SAT5 encodes a putative acetyltransferase, and so, with SAT6, may affect endogenous protection from toxicity. The probable transcription factor SAT9 may regulate the expression of the SC1 cluster. SC2 encodes proteins SAT11 to SAT16, the largest of which encodes the putative reducing PKS SAT13. SAT11 is a cytochrome P450 monooxygenase, while SAT14 and SAT16 are probable acetyltransferases. The SC2 cluster may be regulated by the transcription factor SAT15. SC3 is a small cluster that encodes 5 proteins, SAT17 to SAT21. SAT21 is a putative MFS-type transporter which may have a role in exporting secondary metabolites. The four other proteins putatively encoded in SC3 include the taurine hydroxylase-like protein SAT17, the O-methyltransferase SAT18, the acetyltransferase SAT19, and the Cys6-type zinc finger SAT20, the latter being probably involved in regulation of SC3 expression. The protein is Short-chain dehydrogenase/reductase SAT3 of Stachybotrys chartarum (strain CBS 109288 / IBT 7711) (Toxic black mold).